The sequence spans 117 residues: Large ribosomal subunit protein bL19 (117 aa).

The protein belongs to the bacterial ribosomal protein bL19 family.

In terms of biological role, this protein is located at the 30S-50S ribosomal subunit interface and may play a role in the structure and function of the aminoacyl-tRNA binding site. The sequence is that of Large ribosomal subunit protein bL19 from Rhodopirellula baltica (strain DSM 10527 / NCIMB 13988 / SH1).